The sequence spans 128 residues: MFHLKAFSQYYSFCKMDLIFKHNSFLDRSEEISLCMHIKWYFSSGYFHWSLITQNYIIFLFLFPFKFSMHSCSSRIWGKPLYKFENRHNPFSSLFMSHIPVLTVISYCVCCLSCFFDTCKSVLYCSTS.

2 helical membrane-spanning segments follow: residues 45–65 and 95–115; these read GYFH…LFPF and FMSH…LSCF.

It is found in the membrane. This is an uncharacterized protein from Saccharomyces cerevisiae (strain ATCC 204508 / S288c) (Baker's yeast).